The following is a 176-amino-acid chain: Ribosome rescue factor SmrB (176 aa).

Positions Leu-93–Asp-168 constitute a Smr domain.

This sequence belongs to the SmrB family. As to quaternary structure, associates with collided ribosomes, but not with correctly translating polysomes.

Functionally, acts as a ribosome collision sensor. Detects stalled/collided disomes (pairs of ribosomes where the leading ribosome is stalled and a second ribosome has collided with it) and endonucleolytically cleaves mRNA at the 5' boundary of the stalled ribosome. Stalled/collided disomes form a new interface (primarily via the 30S subunits) that binds SmrB. Cleaved mRNA becomes available for tmRNA ligation, leading to ribosomal subunit dissociation and rescue of stalled ribosomes. The sequence is that of Ribosome rescue factor SmrB from Shewanella baltica (strain OS155 / ATCC BAA-1091).